Reading from the N-terminus, the 259-residue chain is UPF0246 protein NMA1114 (259 aa).

It belongs to the UPF0246 family.

This is UPF0246 protein NMA1114 from Neisseria meningitidis serogroup A / serotype 4A (strain DSM 15465 / Z2491).